Consider the following 642-residue polypeptide: MPVITLPDGSQRHYDHAVSVLDVALDIGPGLAKACIAGRVNGELVDASDLIESDAQLAIITAKDAEGLEILRHSCAHLLGHAIKQLWPDTKMAIGPVIDNGFYYDVDIEHTLTQEDLALLEKRMHELADKDYDVIKKKVSWQEARDTFAARGEDYKVAILDENISRDDRPGLYHHEEYVDMCRGPHVPNMRFCHHFKLQKTSGAYWRGDSKNKMLQRIYGTAWGDKKQLNAYLQRLEEAAKRDHRKIGKQLDLYHMQEEAPGMVFWHNDGWTIFRELETFVRMKLKEYQYQEVKGPFMMDRVLWEKTGHWENYAEHMFTTSSENREYCIKPMNCPGHVQIFNQGLKSYRDLPLRMAEFGSCHRNEPSGALHGLMRVRGFTQDDAHVFCTEEQVRDEVNSCIKMVYDMYSTFGFEKIVVKLSTRPEKRIGSDELWTRAEDDLAAALTENGIPFDYQPGEGAFYGPKIEFTLHDCLDRAWQCGTVQLDFSLPGRLSASYIGENNDRQVPVMIHRAILGSMERFIGILTEEYAGFFPTWLAPVQVVVMNITDSQSDYVQQVTKKLQDAGIRAKADLRNEKIGFKIREHTLRRVPYMLVCGDKEVESGKIAVRTRRGKDLGSLDVNVVVDQLLAEIRSRSLHQLEE.

The region spanning 1–61 (MPVITLPDGS…ESDAQLAIIT (61 aa)) is the TGS domain. The interval 243 to 534 (DHRKIGKQLD…LTEEYAGFFP (292 aa)) is catalytic. Residues C334, H385, and H511 each contribute to the Zn(2+) site.

Belongs to the class-II aminoacyl-tRNA synthetase family. As to quaternary structure, homodimer. Zn(2+) serves as cofactor.

It localises to the cytoplasm. It catalyses the reaction tRNA(Thr) + L-threonine + ATP = L-threonyl-tRNA(Thr) + AMP + diphosphate + H(+). Functionally, catalyzes the attachment of threonine to tRNA(Thr) in a two-step reaction: L-threonine is first activated by ATP to form Thr-AMP and then transferred to the acceptor end of tRNA(Thr). Also edits incorrectly charged L-seryl-tRNA(Thr). The protein is Threonine--tRNA ligase of Yersinia pseudotuberculosis serotype O:1b (strain IP 31758).